Reading from the N-terminus, the 81-residue chain is ATP synthase subunit c (81 aa).

Transmembrane regions (helical) follow at residues 7–27 (AASVVAAGLAVGLAAIGPGIG) and 57–77 (LAFMESLTIYGLVVALVLLFA).

It belongs to the ATPase C chain family. F-type ATPases have 2 components, F(1) - the catalytic core - and F(0) - the membrane proton channel. F(1) has five subunits: alpha(3), beta(3), gamma(1), delta(1), epsilon(1). F(0) has four main subunits: a(1), b(1), b'(1) and c(10-14). The alpha and beta chains form an alternating ring which encloses part of the gamma chain. F(1) is attached to F(0) by a central stalk formed by the gamma and epsilon chains, while a peripheral stalk is formed by the delta, b and b' chains.

It is found in the cellular thylakoid membrane. Functionally, f(1)F(0) ATP synthase produces ATP from ADP in the presence of a proton or sodium gradient. F-type ATPases consist of two structural domains, F(1) containing the extramembraneous catalytic core and F(0) containing the membrane proton channel, linked together by a central stalk and a peripheral stalk. During catalysis, ATP synthesis in the catalytic domain of F(1) is coupled via a rotary mechanism of the central stalk subunits to proton translocation. Its function is as follows. Key component of the F(0) channel; it plays a direct role in translocation across the membrane. A homomeric c-ring of between 10-14 subunits forms the central stalk rotor element with the F(1) delta and epsilon subunits. The protein is ATP synthase subunit c of Synechococcus sp. (strain CC9311).